A 105-amino-acid polypeptide reads, in one-letter code: Histone H2A-like 1 (105 aa).

The protein belongs to the histone H2A family. The nucleosome is a histone octamer containing two molecules each of H2A, H2B, H3 and H4 assembled in one H3-H4 heterotetramer and two H2A-H2B heterodimers. May be incorporated into a proportion of nucleosomes, replacing one or more H2A molecules. Interacts with H2BC1/TH2B; preferentially dimerizes with H2BC1/TH2B to form nucleosomes. As to expression, testis-specific.

It is found in the nucleus. It localises to the chromosome. Atypical histone H2A which can replace conventional H2A in some nucleosomes and may play a role during spermatogenesis. Nucleosomes wrap and compact DNA into chromatin, limiting DNA accessibility to the cellular machineries which require DNA as a template. Histones thereby play a central role in transcription regulation, DNA repair, DNA replication and chromosomal stability. DNA accessibility is regulated via a complex set of post-translational modifications of histones, also called histone code, and nucleosome remodeling. The sequence is that of Histone H2A-like 1 from Mus musculus (Mouse).